Here is a 423-residue protein sequence, read N- to C-terminus: Enolase (423 aa).

Q166 serves as a coordination point for (2R)-2-phosphoglycerate. The Proton donor role is filled by E208. D242, E283, and D310 together coordinate Mg(2+). (2R)-2-phosphoglycerate is bound by residues K335, R364, S365, and K386. The Proton acceptor role is filled by K335.

Belongs to the enolase family. Mg(2+) is required as a cofactor.

It is found in the cytoplasm. The protein localises to the secreted. It localises to the cell surface. It catalyses the reaction (2R)-2-phosphoglycerate = phosphoenolpyruvate + H2O. It participates in carbohydrate degradation; glycolysis; pyruvate from D-glyceraldehyde 3-phosphate: step 4/5. In terms of biological role, catalyzes the reversible conversion of 2-phosphoglycerate (2-PG) into phosphoenolpyruvate (PEP). It is essential for the degradation of carbohydrates via glycolysis. The sequence is that of Enolase from Elusimicrobium minutum (strain Pei191).